A 327-amino-acid chain; its full sequence is Glutaminase (327 aa).

Positions 92, 143, 195, 218, 263, and 281 each coordinate substrate.

The protein belongs to the glutaminase family. As to quaternary structure, homotetramer.

It catalyses the reaction L-glutamine + H2O = L-glutamate + NH4(+). This Synechocystis sp. (strain ATCC 27184 / PCC 6803 / Kazusa) protein is Glutaminase.